The primary structure comprises 310 residues: Probable manganese-dependent inorganic pyrophosphatase (310 aa).

Residues His9, Asp13, Asp15, Asp76, His98, and Asp150 each coordinate Mn(2+).

The protein belongs to the PPase class C family. Mn(2+) serves as cofactor.

It localises to the cytoplasm. The enzyme catalyses diphosphate + H2O = 2 phosphate + H(+). The protein is Probable manganese-dependent inorganic pyrophosphatase of Streptococcus thermophilus (strain CNRZ 1066).